The sequence spans 477 residues: Prolyl tri/tetrapeptidyl aminopeptidase (477 aa).

An N-terminal signal peptide occupies residues Met-1–Ala-27. A propeptide spanning residues Ala-28–Pro-33 is cleaved from the precursor. Residues Gln-448–Pro-477 form a disordered region. The segment covering Ala-462 to Pro-477 has biased composition (basic and acidic residues).

The protein belongs to the peptidase S37 family.

Its subcellular location is the secreted. It localises to the cell surface. With respect to regulation, completely inhibited by the serine protease inhibitor phenylmethylsulfonyl fluoride. Partially inhibited by the serine protease inhibitor Pefabloc. Not inhibited by cysteine proteinase-specific or metalloproteinase-specific inhibitors. Not inhibited by prolinal or its derivatives. EDTA and EGTA both partially inhibit this enzyme. EDTA has no effect on activity. Functionally, has proline-specific tripeptidyl aminopeptidase and tetrapeptidyl aminopeptidase activity. Activity is highest against tripeptides containing an Ala-Pro motif. Involved in the final processing of transglutaminase, by removing either the tetrapeptide Phe-Arg-Ala-Pro left after TAMEP or SAM-P45 hydrolysis, or the tripeptide Arg-Ala-Pro left after SGMP II hydrolysis in a single step. In Streptomyces mobaraensis (Streptoverticillium mobaraense), this protein is Prolyl tri/tetrapeptidyl aminopeptidase (ptp).